A 124-amino-acid polypeptide reads, in one-letter code: Small ribosomal subunit protein uS12 (124 aa).

The residue at position 89 (D89) is a 3-methylthioaspartic acid. The disordered stretch occupies residues 104–124 (TQGVKNRGQARSRYGAKKEKK). A compositionally biased stretch (basic residues) spans 111–124 (GQARSRYGAKKEKK).

Belongs to the universal ribosomal protein uS12 family. As to quaternary structure, part of the 30S ribosomal subunit. Contacts proteins S8 and S17. May interact with IF1 in the 30S initiation complex.

With S4 and S5 plays an important role in translational accuracy. In terms of biological role, interacts with and stabilizes bases of the 16S rRNA that are involved in tRNA selection in the A site and with the mRNA backbone. Located at the interface of the 30S and 50S subunits, it traverses the body of the 30S subunit contacting proteins on the other side and probably holding the rRNA structure together. The combined cluster of proteins S8, S12 and S17 appears to hold together the shoulder and platform of the 30S subunit. The protein is Small ribosomal subunit protein uS12 of Micrococcus luteus (strain ATCC 4698 / DSM 20030 / JCM 1464 / CCM 169 / CCUG 5858 / IAM 1056 / NBRC 3333 / NCIMB 9278 / NCTC 2665 / VKM Ac-2230) (Micrococcus lysodeikticus).